The primary structure comprises 275 residues: Large ribosomal subunit protein uL2 (275 aa).

Disordered regions lie at residues 24 to 54 and 223 to 275; these read LYKGRPHDALTEKKTSKAGRNNSGRVTVRHQ and VAMN…RHKR. Basic and acidic residues-rich tracts occupy residues 25–38 and 229–241; these read YKGRPHDALTEKKT and DHPHGGGEGRTGE.

The protein belongs to the universal ribosomal protein uL2 family. Part of the 50S ribosomal subunit. Forms a bridge to the 30S subunit in the 70S ribosome.

One of the primary rRNA binding proteins. Required for association of the 30S and 50S subunits to form the 70S ribosome, for tRNA binding and peptide bond formation. It has been suggested to have peptidyltransferase activity; this is somewhat controversial. Makes several contacts with the 16S rRNA in the 70S ribosome. In Azoarcus sp. (strain BH72), this protein is Large ribosomal subunit protein uL2.